The sequence spans 183 residues: Bifunctional protein PyrR (183 aa).

Substrate contacts are provided by residues 46 to 47 (TR), Arg87, 107 to 115 (DDVIFSGRT), Arg140, and Val164. A PRPP-binding motif is present at residues 103–115 (VVLVDDVIFSGRT).

It belongs to the purine/pyrimidine phosphoribosyltransferase family. PyrR subfamily.

It carries out the reaction UMP + diphosphate = 5-phospho-alpha-D-ribose 1-diphosphate + uracil. In terms of biological role, regulates the transcription of the pyrimidine nucleotide (pyr) operon in response to exogenous pyrimidines. Its function is as follows. Also displays a weak uracil phosphoribosyltransferase activity which is not physiologically significant. The polypeptide is Bifunctional protein PyrR (Thermosynechococcus vestitus (strain NIES-2133 / IAM M-273 / BP-1)).